The sequence spans 320 residues: Acetyl-coenzyme A carboxylase carboxyl transferase subunit beta (320 aa).

The region spanning 25–294 (LWRKCPECGT…AIVGDLPAPD (270 aa)) is the CoA carboxyltransferase N-terminal domain. Cys-29, Cys-32, Cys-48, and Cys-51 together coordinate Zn(2+). A C4-type zinc finger spans residues 29-51 (CPECGTMLFHRELSDNLFVCISC). The interval 290–320 (LPAPDPAPATPEPQKAAPSAPAQDKPGAGRS) is disordered.

This sequence belongs to the AccD/PCCB family. Acetyl-CoA carboxylase is a heterohexamer composed of biotin carboxyl carrier protein (AccB), biotin carboxylase (AccC) and two subunits each of ACCase subunit alpha (AccA) and ACCase subunit beta (AccD). Zn(2+) is required as a cofactor.

The protein localises to the cytoplasm. The catalysed reaction is N(6)-carboxybiotinyl-L-lysyl-[protein] + acetyl-CoA = N(6)-biotinyl-L-lysyl-[protein] + malonyl-CoA. It participates in lipid metabolism; malonyl-CoA biosynthesis; malonyl-CoA from acetyl-CoA: step 1/1. Functionally, component of the acetyl coenzyme A carboxylase (ACC) complex. Biotin carboxylase (BC) catalyzes the carboxylation of biotin on its carrier protein (BCCP) and then the CO(2) group is transferred by the transcarboxylase to acetyl-CoA to form malonyl-CoA. In Dinoroseobacter shibae (strain DSM 16493 / NCIMB 14021 / DFL 12), this protein is Acetyl-coenzyme A carboxylase carboxyl transferase subunit beta.